Here is a 359-residue protein sequence, read N- to C-terminus: Outer membrane protein P5 (359 aa).

The signal sequence occupies residues 1-21; the sequence is MKKTAIALVVAGLAAASVAQA. 8 consecutive transmembrane segments (beta stranded) span residues 27 to 37, 64 to 75, 83 to 91, 110 to 121, 126 to 134, 164 to 173, 178 to 185, and 211 to 219; these read TFYAGVKAGQG, TFTYGVFGGYQI, LAAELGYDD, HGAYLSLKGSYE, LDVYGKAGV, GLFAVGAEYA, LAVRLEYQ, and CINAGISYR. The region spanning 233–359 is the OmpA-like domain; the sequence is MVSKTFSLNS…RVEIAVNGTK (127 aa). The cysteines at positions 332 and 344 are disulfide-linked.

The protein belongs to the outer membrane OOP (TC 1.B.6) superfamily. OmpA family. As to quaternary structure, monomer and homodimer.

The protein localises to the cell outer membrane. The protein resides in the fimbrium. Functionally, acts as a fimbriae subunit, allowing adhesion to host cells. Its function is as follows. With TolR probably plays a role in maintaining the position of the peptidoglycan cell wall in the periplasm. Acts as a porin with low permeability that allows slow penetration of small solutes; an internal gate slows down solute passage. This is Outer membrane protein P5 from Haemophilus influenzae.